Reading from the N-terminus, the 249-residue chain is Phosphate import ATP-binding protein PstB 2 (249 aa).

The ABC transporter domain occupies 4-244 (FDIENLDLYY…PSDDRTRGYV (241 aa)). ATP is bound at residue 36–43 (GPSGCGKS).

It belongs to the ABC transporter superfamily. Phosphate importer (TC 3.A.1.7) family. In terms of assembly, the complex is composed of two ATP-binding proteins (PstB), two transmembrane proteins (PstC and PstA) and a solute-binding protein (PstS).

The protein resides in the cell inner membrane. It carries out the reaction phosphate(out) + ATP + H2O = ADP + 2 phosphate(in) + H(+). Part of the ABC transporter complex PstSACB involved in phosphate import. Responsible for energy coupling to the transport system. The sequence is that of Phosphate import ATP-binding protein PstB 2 from Vibrio vulnificus (strain CMCP6).